The sequence spans 164 residues: Probable ubiquitin-conjugating enzyme E2 7 (164 aa).

The UBC core domain maps to Gln-3–Glu-163. Cys-88 functions as the Glycyl thioester intermediate in the catalytic mechanism.

It belongs to the ubiquitin-conjugating enzyme family.

The catalysed reaction is S-ubiquitinyl-[E1 ubiquitin-activating enzyme]-L-cysteine + [E2 ubiquitin-conjugating enzyme]-L-cysteine = [E1 ubiquitin-activating enzyme]-L-cysteine + S-ubiquitinyl-[E2 ubiquitin-conjugating enzyme]-L-cysteine.. Its pathway is protein modification; protein ubiquitination. Its function is as follows. Catalyzes the covalent attachment of ubiquitin to other proteins. The polypeptide is Probable ubiquitin-conjugating enzyme E2 7 (ubc-7) (Caenorhabditis elegans).